The chain runs to 417 residues: Gamma-glutamyl phosphate reductase (417 aa).

It belongs to the gamma-glutamyl phosphate reductase family.

It localises to the cytoplasm. It carries out the reaction L-glutamate 5-semialdehyde + phosphate + NADP(+) = L-glutamyl 5-phosphate + NADPH + H(+). The protein operates within amino-acid biosynthesis; L-proline biosynthesis; L-glutamate 5-semialdehyde from L-glutamate: step 2/2. Catalyzes the NADPH-dependent reduction of L-glutamate 5-phosphate into L-glutamate 5-semialdehyde and phosphate. The product spontaneously undergoes cyclization to form 1-pyrroline-5-carboxylate. This is Gamma-glutamyl phosphate reductase from Heliobacterium modesticaldum (strain ATCC 51547 / Ice1).